The sequence spans 188 residues: ATP synthase subunit b (188 aa).

A helical membrane pass occupies residues 24-44 (LPASYDIVWSLVVFIIVLILF).

Belongs to the ATPase B chain family. F-type ATPases have 2 components, F(1) - the catalytic core - and F(0) - the membrane proton channel. F(1) has five subunits: alpha(3), beta(3), gamma(1), delta(1), epsilon(1). F(0) has three main subunits: a(1), b(2) and c(10-14). The alpha and beta chains form an alternating ring which encloses part of the gamma chain. F(1) is attached to F(0) by a central stalk formed by the gamma and epsilon chains, while a peripheral stalk is formed by the delta and b chains.

It localises to the cell membrane. Functionally, f(1)F(0) ATP synthase produces ATP from ADP in the presence of a proton or sodium gradient. F-type ATPases consist of two structural domains, F(1) containing the extramembraneous catalytic core and F(0) containing the membrane proton channel, linked together by a central stalk and a peripheral stalk. During catalysis, ATP synthesis in the catalytic domain of F(1) is coupled via a rotary mechanism of the central stalk subunits to proton translocation. In terms of biological role, component of the F(0) channel, it forms part of the peripheral stalk, linking F(1) to F(0). In Corynebacterium diphtheriae (strain ATCC 700971 / NCTC 13129 / Biotype gravis), this protein is ATP synthase subunit b.